A 407-amino-acid chain; its full sequence is Putative glucose/galactose transporter (407 aa).

Helical transmembrane passes span 11–31 (GSLTALFFLMGFITVLNDILI), 47–67 (LIQFCFFGAYFIMGGVFGNVI), 70–90 (IGYPFGVVLGFVITASGCALF), 96–116 (FGSYGFFLGALFILASGIVCL), 139–159 (VQAFNSLGTTLGPIFGSLLIF), 180–200 (VQMPYLGLAVFSLLLALVMYL), 225–245 (FVFGALGIFFYVGGEVAIGSF), 263–283 (HYLVYYWGGAMVGRFLGSALM), 300–320 (IILIALAILIGGKIALFALTF), 321–341 (VGFFNSIMFPTIFSLATLNLG), 349–369 (GVISMAIVGGALIPPIQGVVT), and 378–398 (NLLYAYSVPLLCYFYILFFAL).

It belongs to the major facilitator superfamily. FHS transporter (TC 2.A.1.7) family.

It is found in the cell inner membrane. Intake of glucose and galactose. This Helicobacter pylori (strain J99 / ATCC 700824) (Campylobacter pylori J99) protein is Putative glucose/galactose transporter (gluP).